A 247-amino-acid polypeptide reads, in one-letter code: 5'-nucleotidase SurE (247 aa).

Residues Asp8, Asp9, Ser39, and Asn91 each contribute to the a divalent metal cation site.

This sequence belongs to the SurE nucleotidase family. It depends on a divalent metal cation as a cofactor.

The protein localises to the cytoplasm. The enzyme catalyses a ribonucleoside 5'-phosphate + H2O = a ribonucleoside + phosphate. In terms of biological role, nucleotidase that shows phosphatase activity on nucleoside 5'-monophosphates. This chain is 5'-nucleotidase SurE, found in Nitrosomonas europaea (strain ATCC 19718 / CIP 103999 / KCTC 2705 / NBRC 14298).